We begin with the raw amino-acid sequence, 343 residues long: Phospholipid phosphatase-related protein type 2 (343 aa).

3 helical membrane passes run 12–32 (FSII…VVLL), 72–92 (ALIY…GELA), and 129–149 (FLGV…AGQV). N165 is a glycosylation site (N-linked (GlcNAc...) asparagine). Helical transmembrane passes span 210–230 (AALC…VFRV), 239–259 (SLCL…VAEY), and 266–286 (VLAG…CVVH). Residues 291-343 (RPHSGRRLSPWEDLSQAPTMDSPLEKNPRPAGRIRHRHGSPHPSRRTVPAVAT) are disordered. 2 positions are modified to phosphoserine: S299 and S312. Positions 322-335 (GRIRHRHGSPHPSR) are enriched in basic residues.

It belongs to the PA-phosphatase related phosphoesterase family.

It is found in the membrane. The sequence is that of Phospholipid phosphatase-related protein type 2 from Mus musculus (Mouse).